The following is a 447-amino-acid chain: N-succinylarginine dihydrolase (447 aa).

Substrate-binding positions include 19–28, Asn110, and 137–138; these read AGLSFGNEAS and HR. Residue Glu174 is part of the active site. Arg212 contributes to the substrate binding site. Residue His248 is part of the active site. Substrate is bound by residues Asp250 and Asn359. Catalysis depends on Cys365, which acts as the Nucleophile.

The protein belongs to the succinylarginine dihydrolase family. In terms of assembly, homodimer.

It carries out the reaction N(2)-succinyl-L-arginine + 2 H2O + 2 H(+) = N(2)-succinyl-L-ornithine + 2 NH4(+) + CO2. Its pathway is amino-acid degradation; L-arginine degradation via AST pathway; L-glutamate and succinate from L-arginine: step 2/5. Catalyzes the hydrolysis of N(2)-succinylarginine into N(2)-succinylornithine, ammonia and CO(2). This is N-succinylarginine dihydrolase from Salmonella enteritidis PT4 (strain P125109).